We begin with the raw amino-acid sequence, 440 residues long: Xaa-Pro dipeptidase (440 aa).

Asp244, Asp255, His335, Glu380, and Glu419 together coordinate Mn(2+).

The protein belongs to the peptidase M24B family. Bacterial-type prolidase subfamily. Requires Mn(2+) as cofactor.

It catalyses the reaction Xaa-L-Pro dipeptide + H2O = an L-alpha-amino acid + L-proline. Its function is as follows. Splits dipeptides with a prolyl residue in the C-terminal position. This chain is Xaa-Pro dipeptidase, found in Shewanella piezotolerans (strain WP3 / JCM 13877).